The primary structure comprises 533 residues: Probable protein kinase UbiB (533 aa).

A helical membrane pass occupies residues 24–44; it reads LILELPMLPWWLRLLGATLPW. Residues 126-494 enclose the Protein kinase domain; sequence RFEREPLASA…WKGSRHDWLG (369 aa). ATP contacts are provided by residues 132 to 140 and Lys-154; that span reads LASASVAQV. Catalysis depends on Asp-289, which acts as the Proton acceptor. The helical transmembrane segment at 510-530 threads the bilayer; that stretch reads LGQQLEAWPAWVMLAGGVFLI.

The protein belongs to the ABC1 family. UbiB subfamily.

Its subcellular location is the cell inner membrane. Its pathway is cofactor biosynthesis; ubiquinone biosynthesis [regulation]. Is probably a protein kinase regulator of UbiI activity which is involved in aerobic coenzyme Q (ubiquinone) biosynthesis. The chain is Probable protein kinase UbiB from Pseudomonas aeruginosa (strain UCBPP-PA14).